The sequence spans 101 residues: Small ribosomal subunit protein uS10 (101 aa).

The protein belongs to the universal ribosomal protein uS10 family. As to quaternary structure, part of the 30S ribosomal subunit.

Its function is as follows. Involved in the binding of tRNA to the ribosomes. This chain is Small ribosomal subunit protein uS10, found in Amoebophilus asiaticus (strain 5a2).